A 380-amino-acid chain; its full sequence is Queuine tRNA-ribosyltransferase (380 aa).

Residue Asp96 is the Proton acceptor of the active site. Residues 96 to 100 (DSGGF), Asp150, Gln193, and Gly220 contribute to the substrate site. The tract at residues 251 to 257 (GVGAPDS) is RNA binding. The active-site Nucleophile is the Asp270. An RNA binding; important for wobble base 34 recognition region spans residues 275–279 (TRIAR). Zn(2+) contacts are provided by Cys308, Cys310, Cys313, and His339.

Belongs to the queuine tRNA-ribosyltransferase family. Homodimer. Within each dimer, one monomer is responsible for RNA recognition and catalysis, while the other monomer binds to the replacement base PreQ1. Zn(2+) serves as cofactor.

The enzyme catalyses 7-aminomethyl-7-carbaguanine + guanosine(34) in tRNA = 7-aminomethyl-7-carbaguanosine(34) in tRNA + guanine. It participates in tRNA modification; tRNA-queuosine biosynthesis. Its function is as follows. Catalyzes the base-exchange of a guanine (G) residue with the queuine precursor 7-aminomethyl-7-deazaguanine (PreQ1) at position 34 (anticodon wobble position) in tRNAs with GU(N) anticodons (tRNA-Asp, -Asn, -His and -Tyr). Catalysis occurs through a double-displacement mechanism. The nucleophile active site attacks the C1' of nucleotide 34 to detach the guanine base from the RNA, forming a covalent enzyme-RNA intermediate. The proton acceptor active site deprotonates the incoming PreQ1, allowing a nucleophilic attack on the C1' of the ribose to form the product. After dissociation, two additional enzymatic reactions on the tRNA convert PreQ1 to queuine (Q), resulting in the hypermodified nucleoside queuosine (7-(((4,5-cis-dihydroxy-2-cyclopenten-1-yl)amino)methyl)-7-deazaguanosine). The protein is Queuine tRNA-ribosyltransferase of Streptococcus pyogenes serotype M3 (strain ATCC BAA-595 / MGAS315).